The following is a 932-amino-acid chain: DNA mismatch repair protein MutS (932 aa).

An ATP-binding site is contributed by 615–622 (GPNMAGKS).

This sequence belongs to the DNA mismatch repair MutS family.

Its function is as follows. This protein is involved in the repair of mismatches in DNA. It is possible that it carries out the mismatch recognition step. This protein has a weak ATPase activity. The chain is DNA mismatch repair protein MutS from Clostridium botulinum (strain Okra / Type B1).